Here is a 314-residue protein sequence, read N- to C-terminus: Olfactory receptor 5P67 (314 aa).

At 1–28 (MAFLEDGNHTAVTEFILLGLTDDPVLRV) the chain is on the extracellular side. The N-linked (GlcNAc...) asparagine glycan is linked to N8. Residues 29 to 49 (ILFTIILCIYLVTVSGNLSTI) form a helical membrane-spanning segment. At 50 to 57 (LLIRVSSQ) the chain is on the cytoplasmic side. The chain crosses the membrane as a helical span at residues 58–78 (LHHPMYFFLSHVGSVDIGYSS). Over 79 to 102 (SVTPNMLVNFLVEKHTIAYLGCGI) the chain is Extracellular. C100 and C192 are disulfide-bonded. The chain crosses the membrane as a helical span at residues 103-123 (QLSSAAFFGTAECFLLATMAY). Residues 124–136 (DRFVAICNPLLYS) are Cytoplasmic-facing. A helical membrane pass occupies residues 137–157 (TKMSTQTCIQLVVGSYTGGIL). Residues 158–199 (NASFAIISFFSFLFCGPNRINHFYCDFAPLVELSCSDINVSV) are Extracellular-facing. The chain crosses the membrane as a helical span at residues 200 to 220 (VITTIFSASVTIITVFVIAIS). Residues 221 to 240 (YTYILITILKMRSTEGRHKA) lie on the Cytoplasmic side of the membrane. Residues 241–261 (FSTCTSYLTAVTLFYGTVTFI) form a helical membrane-spanning segment. Residues 262-274 (YVVPKSNYSTDQN) are Extracellular-facing. Residue N268 is glycosylated (N-linked (GlcNAc...) asparagine). The helical transmembrane segment at 275-295 (KVASVFYIVVIPMLNPLIYSL) threads the bilayer. The Cytoplasmic segment spans residues 296-314 (RNNDIKGALKRQLGKKTFS).

This sequence belongs to the G-protein coupled receptor 1 family.

It localises to the cell membrane. Its function is as follows. Potential odorant receptor. In Mus musculus (Mouse), this protein is Olfactory receptor 5P67.